A 1162-amino-acid chain; its full sequence is Spike glycoprotein (1162 aa).

A signal peptide spans M1–A18. Over V19 to Y1095 the chain is Extracellular. 21 N-linked (GlcNAc...) asparagine; by host glycosylation sites follow: N51, N77, N103, N144, N163, N178, N212, N237, N247, N264, N276, N306, N425, N447, N513, N530, N579, N591, N669, N676, and N714. The heptad repeat 1 (HR1) stretch occupies residues I769–L874. Positions Q822 to V866 form a coiled coil. N947, N960, N979, N1014, N1038, N1051, and N1074 each carry an N-linked (GlcNAc...) asparagine; by host glycan. The tract at residues N1024 to I1105 is heptad repeat 2 (HR2). Positions P1055–L1083 form a coiled coil. Residues V1096–F1116 form a helical membrane-spanning segment. Over M1117 to V1162 the chain is Cytoplasmic. Positions K1159–V1162 match the Di-lysine motif motif.

This sequence belongs to the gammacoronaviruses spike protein family. In terms of assembly, homotrimer; each monomer consists of a S1 and a S2 subunit. The resulting peplomers protrude from the virus surface as spikes. Specific enzymatic cleavages in vivo yield mature proteins. The precursor is processed into S1 and S2 by host cell furin or furin-like protease to yield the mature S1 and S2 proteins. The cleavage site between S1 and S2 requires the optimal sequence [KR]-X-[KR]-R. Additionally, a second cleavage leads to the release of a fusion peptide after viral attachment to host cell receptor.

The protein localises to the virion membrane. Its subcellular location is the host endoplasmic reticulum-Golgi intermediate compartment membrane. In terms of biological role, attaches the virion to the host cell membrane by interacting with sialic acids, initiating the infection. Functionally, mediates fusion of the virion and cellular membranes by acting as a class I viral fusion protein. Under the current model, the protein has at least 3 conformational states: pre-fusion native state, pre-hairpin intermediate state, and post-fusion hairpin state. During viral and target cell membrane fusion, the coiled coil regions (heptad repeats) assume a trimer-of-hairpins structure, positioning the fusion peptide in close proximity to the C-terminal region of the ectodomain. The formation of this structure appears to drive apposition and subsequent fusion of viral and target cell membranes. Its function is as follows. Acts as a viral fusion peptide after S2 cleavage occurring upon virus endocytosis. This chain is Spike glycoprotein, found in Avian infectious bronchitis virus (strain Beaudette) (IBV).